Reading from the N-terminus, the 1324-residue chain is Sal-like protein 1 (1324 aa).

The tract at residues 1 to 42 (MSRRKQAKPQHFQSDPEVASLPRRDGDTEKGQPSRPTKSKDA) is disordered. Residues 22 to 42 (PRRDGDTEKGQPSRPTKSKDA) are compositionally biased toward basic and acidic residues. A C2H2-type 1; atypical zinc finger spans residues 43–65 (HVCGRCCAEFFELSDLLLHKKNC). Disordered regions lie at residues 77-102 (NPASPPETFSPSPPPDNPDEQMNDTV), 108-127 (VDCSDLSEHNGLDREESMEV), 132-172 (ANKS…TSAI), and 317-336 (PPIQLPQSSSGNTIIPSNSG). The segment covering 113–124 (LSEHNGLDREES) has biased composition (basic and acidic residues). Over residues 135-158 (SGSGTSSGSHSSTAPSSSSSSSSS) the composition is skewed to low complexity. Residues 321–336 (LPQSSSGNTIIPSNSG) show a composition bias toward polar residues. Lys-439 is covalently cross-linked (Glycyl lysine isopeptide (Lys-Gly) (interchain with G-Cter in SUMO2)). C2H2-type zinc fingers lie at residues 449–471 (HKCRFCAKVFGSDSALQIHLRSH) and 477–499 (FKCNICGNRFSTKGNLKVHFQRH). The tract at residues 577-646 (PIPISHSATS…ASSSVLSSPA (70 aa)) is disordered. Ser-590, Ser-593, and Ser-595 each carry phosphoserine. A compositionally biased stretch (low complexity) spans 633 to 646 (SVPTASSSVLSSPA). Glycyl lysine isopeptide (Lys-Gly) (interchain with G-Cter in SUMO2) cross-links involve residues Lys-673, Lys-690, and Lys-701. 3 consecutive C2H2-type zinc fingers follow at residues 706-728 (NECIICHRVLSCQSALKMHYRTH), 734-756 (FKCKICGRAFTTKGNLKTHYSVH), and 766-788 (HSCPICQKKFTNAVVLQQHIRMH). Disordered stretches follow at residues 790–856 (GGQI…SSPL) and 894–963 (EGDV…LSPT). A compositionally biased stretch (polar residues) spans 802–811 (YSESMESDTG). Positions 820-833 (DLDNFSDENMEDCP) are enriched in acidic residues. Positions 843 to 856 (SADASQDSLSSSPL) are enriched in low complexity. Residues 899–936 (TNDSSSVGGDMESQSAGSPAISESTSSMQALSPSNSTQ) show a composition bias toward polar residues. The segment covering 937–949 (EFHKSPSIEEKPQ) has biased composition (basic and acidic residues). 2 positions are modified to phosphoserine: Ser-941 and Ser-943. Glycyl lysine isopeptide (Lys-Gly) (interchain with G-Cter in SUMO2) cross-links involve residues Lys-947 and Lys-982. 2 consecutive C2H2-type zinc fingers follow at residues 1001–1023 (TACDICGKTFACQSALDIHYRSH) and 1029–1051 (FICTVCNRGFSTKGNLKQHMLTH). Lys-1086 participates in a covalent cross-link: Glycyl lysine isopeptide (Lys-Gly) (interchain with G-Cter in SUMO2). The segment at 1095–1120 (VSPQDSKDTPTSHVPSGPLSSSATSP) is disordered. Residues 1105–1119 (TSHVPSGPLSSSATS) show a composition bias toward polar residues. 2 C2H2-type zinc fingers span residues 1134-1156 (HYCNTCGKTFSSSSALQIHERTH) and 1162-1184 (FACTICGRAFTTKGNLKVHMGTH). Glycyl lysine isopeptide (Lys-Gly) (interchain with G-Cter in SUMO2) cross-links involve residues Lys-1219, Lys-1299, and Lys-1319.

The protein belongs to the sal C2H2-type zinc-finger protein family. In terms of assembly, may associate with NuRD histone deacetylase complex (HDAC). Interacts with components of HDAC complex including HDAC1, HDAC2, RBBP4, RBPP7, MTA1 and MTA2. Interacts with CCNQ. Interacts with NSD2 (via PHD-type zinc fingers 1, 2 and 3). Highest levels in kidney. Lower levels in adult brain (enriched in corpus callosum, lower expression in substantia nigra) and liver.

The protein resides in the nucleus. Its function is as follows. Transcriptional repressor involved in organogenesis. Plays an essential role in ureteric bud invasion during kidney development. This chain is Sal-like protein 1 (SALL1), found in Homo sapiens (Human).